The primary structure comprises 101 residues: Small ribosomal subunit protein bS18c (101 aa).

The protein belongs to the bacterial ribosomal protein bS18 family. In terms of assembly, part of the 30S ribosomal subunit.

The protein resides in the plastid. It is found in the chloroplast. This chain is Small ribosomal subunit protein bS18c, found in Guizotia abyssinica (Niger).